The following is a 326-amino-acid chain: N-acetyl-gamma-glutamyl-phosphate reductase (326 aa).

Cys-155 is a catalytic residue.

This sequence belongs to the NAGSA dehydrogenase family. Type 1 subfamily.

It localises to the cytoplasm. It catalyses the reaction N-acetyl-L-glutamate 5-semialdehyde + phosphate + NADP(+) = N-acetyl-L-glutamyl 5-phosphate + NADPH + H(+). The protein operates within amino-acid biosynthesis; L-arginine biosynthesis; N(2)-acetyl-L-ornithine from L-glutamate: step 3/4. Functionally, catalyzes the NADPH-dependent reduction of N-acetyl-5-glutamyl phosphate to yield N-acetyl-L-glutamate 5-semialdehyde. This is N-acetyl-gamma-glutamyl-phosphate reductase from Shewanella baltica (strain OS195).